Consider the following 325-residue polypeptide: Tetraacyldisaccharide 4'-kinase (325 aa).

Position 58 to 65 (58 to 65 (TVGGSGKT)) interacts with ATP.

The protein belongs to the LpxK family.

It catalyses the reaction a lipid A disaccharide + ATP = a lipid IVA + ADP + H(+). It participates in glycolipid biosynthesis; lipid IV(A) biosynthesis; lipid IV(A) from (3R)-3-hydroxytetradecanoyl-[acyl-carrier-protein] and UDP-N-acetyl-alpha-D-glucosamine: step 6/6. Its function is as follows. Transfers the gamma-phosphate of ATP to the 4'-position of a tetraacyldisaccharide 1-phosphate intermediate (termed DS-1-P) to form tetraacyldisaccharide 1,4'-bis-phosphate (lipid IVA). The protein is Tetraacyldisaccharide 4'-kinase of Coxiella burnetii (strain Dugway 5J108-111).